The sequence spans 288 residues: Probable HTH-type transcriptional regulator STM3175 (288 aa).

One can recognise an HTH araC/xylS-type domain in the interval 14–113; the sequence is RRVCDHIERH…GQSPRRFRQS (100 aa). DNA-binding regions (H-T-H motif) lie at residues 31–52 and 80–103; these read EALS…TTWS and VIDI…KTAF. The tract at residues 111-288 is putative effector binding domain; binds the peptide antibiotic albicidin; it reads RQSPDWLAWH…LLTDIYLPLR (178 aa).

In terms of assembly, homodimer.

Functionally, probable transcription factor. This is Probable HTH-type transcriptional regulator STM3175 from Salmonella typhimurium (strain LT2 / SGSC1412 / ATCC 700720).